The primary structure comprises 194 residues: Protein GrpE (194 aa).

Positions methionine 1–glutamine 12 are enriched in polar residues. Residues methionine 1–glutamate 39 form a disordered region.

This sequence belongs to the GrpE family. In terms of assembly, homodimer.

The protein localises to the cytoplasm. Participates actively in the response to hyperosmotic and heat shock by preventing the aggregation of stress-denatured proteins, in association with DnaK and GrpE. It is the nucleotide exchange factor for DnaK and may function as a thermosensor. Unfolded proteins bind initially to DnaJ; upon interaction with the DnaJ-bound protein, DnaK hydrolyzes its bound ATP, resulting in the formation of a stable complex. GrpE releases ADP from DnaK; ATP binding to DnaK triggers the release of the substrate protein, thus completing the reaction cycle. Several rounds of ATP-dependent interactions between DnaJ, DnaK and GrpE are required for fully efficient folding. This Erwinia tasmaniensis (strain DSM 17950 / CFBP 7177 / CIP 109463 / NCPPB 4357 / Et1/99) protein is Protein GrpE.